The chain runs to 342 residues: L-threonine 3-dehydrogenase (342 aa).

Residue C38 coordinates Zn(2+). Active-site charge relay system residues include T40 and H43. Zn(2+)-binding residues include H63, E64, C93, C96, C99, and C107. Residues V175, D195, R200, L262–I264, and I286–Y287 each bind NAD(+).

It belongs to the zinc-containing alcohol dehydrogenase family. As to quaternary structure, homotetramer. Zn(2+) is required as a cofactor.

Its subcellular location is the cytoplasm. It catalyses the reaction L-threonine + NAD(+) = (2S)-2-amino-3-oxobutanoate + NADH + H(+). It functions in the pathway amino-acid degradation; L-threonine degradation via oxydo-reductase pathway; glycine from L-threonine: step 1/2. Its function is as follows. Catalyzes the NAD(+)-dependent oxidation of L-threonine to 2-amino-3-ketobutyrate. The polypeptide is L-threonine 3-dehydrogenase (Coxiella burnetii (strain Dugway 5J108-111)).